Here is a 307-residue protein sequence, read N- to C-terminus: Ornithine carbamoyltransferase (307 aa).

Carbamoyl phosphate contacts are provided by residues 54–57, Q81, R105, and 132–135; these read STRT and HPCQ. L-ornithine is bound by residues N163, D221, and 225-226; that span reads SM. Carbamoyl phosphate contacts are provided by residues 261 to 262 and R289; that span reads CL.

The protein belongs to the aspartate/ornithine carbamoyltransferase superfamily. OTCase family.

Its subcellular location is the cytoplasm. It catalyses the reaction carbamoyl phosphate + L-ornithine = L-citrulline + phosphate + H(+). It participates in amino-acid biosynthesis; L-arginine biosynthesis; L-arginine from L-ornithine and carbamoyl phosphate: step 1/3. In terms of biological role, reversibly catalyzes the transfer of the carbamoyl group from carbamoyl phosphate (CP) to the N(epsilon) atom of ornithine (ORN) to produce L-citrulline. The chain is Ornithine carbamoyltransferase from Chromobacterium violaceum (strain ATCC 12472 / DSM 30191 / JCM 1249 / CCUG 213 / NBRC 12614 / NCIMB 9131 / NCTC 9757 / MK).